Consider the following 302-residue polypeptide: Aspartate carbamoyltransferase catalytic subunit (302 aa).

Residues Arg-53 and Thr-54 each coordinate carbamoyl phosphate. Lys-82 provides a ligand contact to L-aspartate. Carbamoyl phosphate is bound by residues Arg-103, His-131, and Gln-134. Positions 164 and 223 each coordinate L-aspartate. Residues Leu-260 and Pro-261 each coordinate carbamoyl phosphate.

The protein belongs to the aspartate/ornithine carbamoyltransferase superfamily. ATCase family. In terms of assembly, heterooligomer of catalytic and regulatory chains.

It catalyses the reaction carbamoyl phosphate + L-aspartate = N-carbamoyl-L-aspartate + phosphate + H(+). It functions in the pathway pyrimidine metabolism; UMP biosynthesis via de novo pathway; (S)-dihydroorotate from bicarbonate: step 2/3. In terms of biological role, catalyzes the condensation of carbamoyl phosphate and aspartate to form carbamoyl aspartate and inorganic phosphate, the committed step in the de novo pyrimidine nucleotide biosynthesis pathway. The chain is Aspartate carbamoyltransferase catalytic subunit from Methanococcus maripaludis (strain DSM 14266 / JCM 13030 / NBRC 101832 / S2 / LL).